Reading from the N-terminus, the 233-residue chain is Transmembrane protein 40 (233 aa).

Methionine 1 carries the post-translational modification N-acetylmethionine. The span at 1-14 (METSASSSQPQDNS) shows a compositional bias: polar residues. A disordered region spans residues 1–143 (METSASSSQP…RRGSDPASGE (143 aa)). A compositionally biased stretch (low complexity) spans 50-70 (SSSSSSSSSSSSSSSSSSSSS). Over residues 93–104 (YPHGNGSPGPGH) the composition is skewed to gly residues. Positions 105–114 (GEPDVLKDEL) are enriched in basic and acidic residues. Position 137 is a phosphoserine (serine 137). The next 2 membrane-spanning stretches (helical) occupy residues 160 to 180 (FFHF…YHYY) and 187 to 207 (LGVG…FGLV).

It is found in the membrane. In Homo sapiens (Human), this protein is Transmembrane protein 40 (TMEM40).